Reading from the N-terminus, the 476-residue chain is POC1 centriolar protein homolog B (476 aa).

WD repeat units lie at residues 16-55, 58-97, 100-139, 142-181, 183-223, 226-265, and 268-307; these read GHKAAITSADFSPNCKQIATASWDTFLMLWSLKPHARAYR, GHKDVVTSLQFSPQGNLLASASRDRTVRLWVLDRKGKSSE, AHTAPVRSVDFSADGQLLVTASEDKSIKVWSMFRQRFLYS, RHTHWVRCAKFSPDGRLIVSCSEDKTIKIWDTTNKQCVNN, SDSV…LLQH, VHSCGVNCLSFHPLGNSLVTASSDGTVKMLDLIEGRLIYT, and GHTGPVFTVSFSKDGELLTSGGADAQVLIWRTNFIHLHCK. Residues 429–468 adopt a coiled-coil conformation; that stretch reads ALEHIMEQLNILTQTVSILEQRLSLTEDKLRDCLENQQKL.

The protein belongs to the WD repeat POC1 family. In terms of assembly, interacts with POC1A. Interacts with FAM161A. Interacts with CEP44; the interaction is direct and recruits POC1B to centriolar microtubules. Forms a microtubule-associated complex with POC5, CETN2 and FAM161A. Interacts with CCDC15. Post-translationally, phosphorylated in mitotic cells that may be mediated by CDK1. As to expression, expressed in the retina.

The protein localises to the cytoplasm. The protein resides in the cytoskeleton. It is found in the microtubule organizing center. It localises to the centrosome. Its subcellular location is the centriole. The protein localises to the cilium basal body. The protein resides in the spindle pole. Its function is as follows. Plays an important role in centriole assembly and/or stability and ciliogenesis. Involved in early steps of centriole duplication, as well as in the later steps of centriole length control. Acts in concert with POC1A to ensure centriole integrity and proper mitotic spindle formation. Required for primary cilia formation, ciliary length and also cell proliferation. Required for retinal integrity. Acts as a positive regulator of centriole elongation. The chain is POC1 centriolar protein homolog B (Poc1b) from Mus musculus (Mouse).